Here is a 215-residue protein sequence, read N- to C-terminus: Pyridoxine/pyridoxamine 5'-phosphate oxidase (215 aa).

Substrate contacts are provided by residues 9 to 12 (RRDY) and lysine 69. Residues 64–69 (RVLLLK), 79–80 (FS), lysine 86, and glutamine 108 each bind FMN. Residues tyrosine 126, arginine 130, and serine 134 each contribute to the substrate site. Residues 143–144 (QS) and tryptophan 188 each bind FMN. 194–196 (RLH) lines the substrate pocket. Arginine 198 lines the FMN pocket.

Belongs to the pyridoxamine 5'-phosphate oxidase family. Homodimer. Requires FMN as cofactor.

It carries out the reaction pyridoxamine 5'-phosphate + O2 + H2O = pyridoxal 5'-phosphate + H2O2 + NH4(+). The catalysed reaction is pyridoxine 5'-phosphate + O2 = pyridoxal 5'-phosphate + H2O2. Its pathway is cofactor metabolism; pyridoxal 5'-phosphate salvage; pyridoxal 5'-phosphate from pyridoxamine 5'-phosphate: step 1/1. It participates in cofactor metabolism; pyridoxal 5'-phosphate salvage; pyridoxal 5'-phosphate from pyridoxine 5'-phosphate: step 1/1. Its function is as follows. Catalyzes the oxidation of either pyridoxine 5'-phosphate (PNP) or pyridoxamine 5'-phosphate (PMP) into pyridoxal 5'-phosphate (PLP). The polypeptide is Pyridoxine/pyridoxamine 5'-phosphate oxidase (Azotobacter vinelandii (strain DJ / ATCC BAA-1303)).